The following is a 598-amino-acid chain: Arginine--tRNA ligase (598 aa).

Residues 131–141 carry the 'HIGH' region motif; that stretch reads ANPTGPMHVGH. Positions 288–308 are disordered; it reads KLPPPKSKKGQPPAQPQPDEE.

It belongs to the class-I aminoacyl-tRNA synthetase family. Monomer.

It localises to the cytoplasm. It catalyses the reaction tRNA(Arg) + L-arginine + ATP = L-arginyl-tRNA(Arg) + AMP + diphosphate. The polypeptide is Arginine--tRNA ligase (Anaeromyxobacter sp. (strain K)).